Here is a 453-residue protein sequence, read N- to C-terminus: Putative amino acid/polyamine transporter MPH_07630_2 (453 aa).

A run of 3 helical transmembrane segments spans residues 2–21, 30–50, and 81–101; these read IGFS…VLVV, VMIW…YSMA, and VCGW…NFIA. An N-linked (GlcNAc...) asparagine glycan is attached at asparagine 110. 2 helical membrane-spanning segments follow: residues 121–141 and 151–171; these read WHAV…SIFL and AILI…LATN. Residue asparagine 186 is glycosylated (N-linked (GlcNAc...) asparagine). Transmembrane regions (helical) follow at residues 193 to 213 and 231 to 251; these read AYAA…YDAP and IVMS…SLCF. Asparagine 274 carries N-linked (GlcNAc...) asparagine glycosylation. 4 consecutive transmembrane segments (helical) span residues 277–297, 330–350, 358–378, and 403–423; these read GSVA…LVCA, LGVP…FNSI, FNTV…IPLL, and GLLA…TFNF. Asparagine 435 carries an N-linked (GlcNAc...) asparagine glycan.

This sequence belongs to the amino acid-polyamine-organocation (APC) superfamily.

Its subcellular location is the membrane. The sequence is that of Putative amino acid/polyamine transporter MPH_07630_2 from Macrophomina phaseolina (strain MS6) (Charcoal rot fungus).